The sequence spans 184 residues: Oligoribonuclease (184 aa).

One can recognise an Exonuclease domain in the interval 7–170; the sequence is LIWIDLEMTG…DDIYESIEEL (164 aa). The active site involves tyrosine 128.

The protein belongs to the oligoribonuclease family.

The protein localises to the cytoplasm. 3'-to-5' exoribonuclease specific for small oligoribonucleotides. This is Oligoribonuclease from Hydrogenovibrio crunogenus (strain DSM 25203 / XCL-2) (Thiomicrospira crunogena).